The chain runs to 89 residues: Putative ankyrin repeat protein RF_1157 (89 aa).

The stretch at 2 to 32 (YNTTPLNFAINQENNEEVIKYLLANGANPRL) is one ANK repeat.

The chain is Putative ankyrin repeat protein RF_1157 from Rickettsia felis (strain ATCC VR-1525 / URRWXCal2) (Rickettsia azadi).